The chain runs to 108 residues: ATP synthase peripheral stalk subunit F6, mitochondrial (108 aa).

A mitochondrion-targeting transit peptide spans 1–32 (MTVQRIFRLSSVLRSAVSVHLRRNIGVTAVAF). 3 positions are modified to N6-acetyllysine: Lys-41, Lys-46, and Lys-79. An N6-acetyllysine; alternate mark is found at Lys-84 and Lys-99. Lys-84 and Lys-99 each carry N6-succinyllysine; alternate. Lys-105 carries the post-translational modification N6-acetyllysine. Ser-108 bears the Phosphoserine mark.

Belongs to the eukaryotic ATPase subunit F6 family. Component of the ATP synthase complex composed at least of ATP5F1A/subunit alpha, ATP5F1B/subunit beta, ATP5MC1/subunit c (homooctomer), MT-ATP6/subunit a, MT-ATP8/subunit 8, ATP5ME/subunit e, ATP5MF/subunit f, ATP5MG/subunit g, ATP5MK/subunit k, ATP5MJ/subunit j, ATP5F1C/subunit gamma, ATP5F1D/subunit delta, ATP5F1E/subunit epsilon, ATP5PF/subunit F6, ATP5PB/subunit b, ATP5PD/subunit d, ATP5PO/subunit OSCP. ATP synthase complex consists of a soluble F(1) head domain (subunits alpha(3) and beta(3)) - the catalytic core - and a membrane F(0) domain - the membrane proton channel (subunits c, a, 8, e, f, g, k and j). These two domains are linked by a central stalk (subunits gamma, delta, and epsilon) rotating inside the F1 region and a stationary peripheral stalk (subunits F6, b, d, and OSCP).

It localises to the mitochondrion. It is found in the mitochondrion inner membrane. Its function is as follows. Subunit F6, of the mitochondrial membrane ATP synthase complex (F(1)F(0) ATP synthase or Complex V) that produces ATP from ADP in the presence of a proton gradient across the membrane which is generated by electron transport complexes of the respiratory chain. ATP synthase complex consist of a soluble F(1) head domain - the catalytic core - and a membrane F(1) domain - the membrane proton channel. These two domains are linked by a central stalk rotating inside the F(1) region and a stationary peripheral stalk. During catalysis, ATP synthesis in the catalytic domain of F(1) is coupled via a rotary mechanism of the central stalk subunits to proton translocation. In vivo, can only synthesize ATP although its ATP hydrolase activity can be activated artificially in vitro. Part of the complex F(0) domain. Part of the complex F(0) domain and the peripheric stalk, which acts as a stator to hold the catalytic alpha(3)beta(3) subcomplex and subunit a/ATP6 static relative to the rotary elements. The sequence is that of ATP synthase peripheral stalk subunit F6, mitochondrial from Rattus norvegicus (Rat).